Consider the following 596-residue polypeptide: Proline--tRNA ligase (596 aa).

The protein belongs to the class-II aminoacyl-tRNA synthetase family. ProS type 1 subfamily. Homodimer.

Its subcellular location is the cytoplasm. The catalysed reaction is tRNA(Pro) + L-proline + ATP = L-prolyl-tRNA(Pro) + AMP + diphosphate. In terms of biological role, catalyzes the attachment of proline to tRNA(Pro) in a two-step reaction: proline is first activated by ATP to form Pro-AMP and then transferred to the acceptor end of tRNA(Pro). As ProRS can inadvertently accommodate and process non-cognate amino acids such as alanine and cysteine, to avoid such errors it has two additional distinct editing activities against alanine. One activity is designated as 'pretransfer' editing and involves the tRNA(Pro)-independent hydrolysis of activated Ala-AMP. The other activity is designated 'posttransfer' editing and involves deacylation of mischarged Ala-tRNA(Pro). The misacylated Cys-tRNA(Pro) is not edited by ProRS. The polypeptide is Proline--tRNA ligase (Prochlorococcus marinus (strain NATL2A)).